The following is a 636-amino-acid chain: Fructose-1,6-bisphosphatase class 3 (636 aa).

Belongs to the FBPase class 3 family. Requires Mn(2+) as cofactor.

The enzyme catalyses beta-D-fructose 1,6-bisphosphate + H2O = beta-D-fructose 6-phosphate + phosphate. It functions in the pathway carbohydrate biosynthesis; gluconeogenesis. This Streptococcus gordonii (strain Challis / ATCC 35105 / BCRC 15272 / CH1 / DL1 / V288) protein is Fructose-1,6-bisphosphatase class 3.